The sequence spans 313 residues: Holliday junction branch migration complex subunit RuvB (313 aa).

The tract at residues 1–157 (MNEYIGQGNI…FGLIMELDFY (157 aa)) is large ATPase domain (RuvB-L). ATP-binding positions include glycine 38, lysine 41, threonine 42, threonine 43, 104–106 (EDF), arginine 147, tyrosine 157, and arginine 194. Threonine 42 is a binding site for Mg(2+). The tract at residues 158 to 228 (SIDELSKIIE…MVEEIMFLLG (71 aa)) is small ATPAse domain (RuvB-S). The segment at 231–313 (KEGLDELDRK…KVQRGLFDEE (83 aa)) is head domain (RuvB-H). Residues arginine 286 and arginine 291 each coordinate DNA.

The protein belongs to the RuvB family. In terms of assembly, homohexamer. Forms an RuvA(8)-RuvB(12)-Holliday junction (HJ) complex. HJ DNA is sandwiched between 2 RuvA tetramers; dsDNA enters through RuvA and exits via RuvB. An RuvB hexamer assembles on each DNA strand where it exits the tetramer. Each RuvB hexamer is contacted by two RuvA subunits (via domain III) on 2 adjacent RuvB subunits; this complex drives branch migration. In the full resolvosome a probable DNA-RuvA(4)-RuvB(12)-RuvC(2) complex forms which resolves the HJ.

It is found in the cytoplasm. The catalysed reaction is ATP + H2O = ADP + phosphate + H(+). Functionally, the RuvA-RuvB-RuvC complex processes Holliday junction (HJ) DNA during genetic recombination and DNA repair, while the RuvA-RuvB complex plays an important role in the rescue of blocked DNA replication forks via replication fork reversal (RFR). RuvA specifically binds to HJ cruciform DNA, conferring on it an open structure. The RuvB hexamer acts as an ATP-dependent pump, pulling dsDNA into and through the RuvAB complex. RuvB forms 2 homohexamers on either side of HJ DNA bound by 1 or 2 RuvA tetramers; 4 subunits per hexamer contact DNA at a time. Coordinated motions by a converter formed by DNA-disengaged RuvB subunits stimulates ATP hydrolysis and nucleotide exchange. Immobilization of the converter enables RuvB to convert the ATP-contained energy into a lever motion, pulling 2 nucleotides of DNA out of the RuvA tetramer per ATP hydrolyzed, thus driving DNA branch migration. The RuvB motors rotate together with the DNA substrate, which together with the progressing nucleotide cycle form the mechanistic basis for DNA recombination by continuous HJ branch migration. Branch migration allows RuvC to scan DNA until it finds its consensus sequence, where it cleaves and resolves cruciform DNA. The chain is Holliday junction branch migration complex subunit RuvB from Thermosipho melanesiensis (strain DSM 12029 / CIP 104789 / BI429).